Here is a 626-residue protein sequence, read N- to C-terminus: Phosphomethylpyrimidine synthase (626 aa).

The segment at 1–27 is disordered; sequence MSKQEKAISLSESAQVDQQSVQPLPNS. Over residues 10–25 the composition is skewed to polar residues; sequence LSESAQVDQQSVQPLP. Residues Asn232, Met261, Tyr290, His326, 346 to 348, 387 to 390, and Glu426 each bind substrate; these read SRG and DGLR. His430 contributes to the Zn(2+) binding site. Position 453 (Tyr453) interacts with substrate. His494 is a binding site for Zn(2+). Cys574, Cys577, and Cys582 together coordinate [4Fe-4S] cluster.

The protein belongs to the ThiC family. As to quaternary structure, homodimer. The cofactor is [4Fe-4S] cluster.

It catalyses the reaction 5-amino-1-(5-phospho-beta-D-ribosyl)imidazole + S-adenosyl-L-methionine = 4-amino-2-methyl-5-(phosphooxymethyl)pyrimidine + CO + 5'-deoxyadenosine + formate + L-methionine + 3 H(+). The protein operates within cofactor biosynthesis; thiamine diphosphate biosynthesis. Catalyzes the synthesis of the hydroxymethylpyrimidine phosphate (HMP-P) moiety of thiamine from aminoimidazole ribotide (AIR) in a radical S-adenosyl-L-methionine (SAM)-dependent reaction. In Pseudomonas entomophila (strain L48), this protein is Phosphomethylpyrimidine synthase.